Consider the following 70-residue polypeptide: Translation initiation factor IF-1 (70 aa).

Residues 1-70 (MKETNLSIKG…LTKGRIIYRH (70 aa)) enclose the S1-like domain.

Belongs to the IF-1 family. Component of the 30S ribosomal translation pre-initiation complex which assembles on the 30S ribosome in the order IF-2 and IF-3, IF-1 and N-formylmethionyl-tRNA(fMet); mRNA recruitment can occur at any time during PIC assembly.

It localises to the cytoplasm. Functionally, one of the essential components for the initiation of protein synthesis. Stabilizes the binding of IF-2 and IF-3 on the 30S subunit to which N-formylmethionyl-tRNA(fMet) subsequently binds. Helps modulate mRNA selection, yielding the 30S pre-initiation complex (PIC). Upon addition of the 50S ribosomal subunit IF-1, IF-2 and IF-3 are released leaving the mature 70S translation initiation complex. This chain is Translation initiation factor IF-1, found in Mycoplasmoides gallisepticum (strain R(low / passage 15 / clone 2)) (Mycoplasma gallisepticum).